The chain runs to 231 residues: Flagellar L-ring protein (231 aa).

An N-terminal signal peptide occupies residues 1–18 (MNRLMIVSLLGIATVLGG). C19 carries the N-palmitoyl cysteine lipid modification. A lipid anchor (S-diacylglycerol cysteine) is attached at C19. A disordered region spans residues 118-141 (LSLSAEYGGSRDAKGDSQAGQSNS).

This sequence belongs to the FlgH family. In terms of assembly, the basal body constitutes a major portion of the flagellar organelle and consists of four rings (L,P,S, and M) mounted on a central rod.

The protein localises to the cell outer membrane. It is found in the bacterial flagellum basal body. Assembles around the rod to form the L-ring and probably protects the motor/basal body from shearing forces during rotation. This is Flagellar L-ring protein from Pseudomonas paraeruginosa (strain DSM 24068 / PA7) (Pseudomonas aeruginosa (strain PA7)).